Reading from the N-terminus, the 123-residue chain is Small ribosomal subunit protein uS12 (123 aa).

Residues 1-30 (MPTIQQLIRKPRQPKIKRSKSQHMEGCPQK) are disordered. The span at 9-21 (RKPRQPKIKRSKS) shows a compositional bias: basic residues. A 3-methylthioaspartic acid modification is found at aspartate 89. Residues 104–123 (TQGVKDRRQRRSKYGAKRPK) are disordered. A compositionally biased stretch (basic residues) spans 110 to 123 (RRQRRSKYGAKRPK).

This sequence belongs to the universal ribosomal protein uS12 family. In terms of assembly, part of the 30S ribosomal subunit. Contacts proteins S8 and S17. May interact with IF1 in the 30S initiation complex.

With S4 and S5 plays an important role in translational accuracy. In terms of biological role, interacts with and stabilizes bases of the 16S rRNA that are involved in tRNA selection in the A site and with the mRNA backbone. Located at the interface of the 30S and 50S subunits, it traverses the body of the 30S subunit contacting proteins on the other side and probably holding the rRNA structure together. The combined cluster of proteins S8, S12 and S17 appears to hold together the shoulder and platform of the 30S subunit. The chain is Small ribosomal subunit protein uS12 from Jannaschia sp. (strain CCS1).